The following is a 437-amino-acid chain: Phosphomethylpyrimidine synthase (437 aa).

Substrate-binding positions include Asn69, Met98, Tyr127, His163, 185-187 (SRG), 226-229 (DACR), and Glu265. Zn(2+) is bound at residue His269. Tyr292 lines the substrate pocket. Residue His333 participates in Zn(2+) binding. [4Fe-4S] cluster contacts are provided by Cys409, Cys412, and Cys416.

It belongs to the ThiC family. Requires [4Fe-4S] cluster as cofactor.

It catalyses the reaction 5-amino-1-(5-phospho-beta-D-ribosyl)imidazole + S-adenosyl-L-methionine = 4-amino-2-methyl-5-(phosphooxymethyl)pyrimidine + CO + 5'-deoxyadenosine + formate + L-methionine + 3 H(+). The protein operates within cofactor biosynthesis; thiamine diphosphate biosynthesis. In terms of biological role, catalyzes the synthesis of the hydroxymethylpyrimidine phosphate (HMP-P) moiety of thiamine from aminoimidazole ribotide (AIR) in a radical S-adenosyl-L-methionine (SAM)-dependent reaction. This chain is Phosphomethylpyrimidine synthase, found in Clostridium botulinum (strain Okra / Type B1).